A 341-amino-acid chain; its full sequence is Transmembrane protein 120A-A (341 aa).

Residues 1-131 (MLFNPTGLTE…KQSKFAYKDE (131 aa)) lie on the Cytoplasmic side of the membrane. A CoA-binding site is contributed by lysine 129. A helical membrane pass occupies residues 132 to 151 (YEKFKLYLTVLLLFFSFTCR). Residues 152–157 (FLVSYR) are Extracellular-facing. A helical transmembrane segment spans residues 158–176 (VVDALFNFLLVWYYCTLTI). At 177–189 (RESILINNGSKIK) the chain is on the cytoplasmic side. CoA-binding residues include serine 186 and lysine 187. Residues 190-208 (GWWVFQHYVSTFLSGVMLT) form a helical membrane-spanning segment. Residues 209 to 217 (WPDGELYQM) are Extracellular-facing. A helical membrane pass occupies residues 218–239 (FRNQFLSYSMYINFVQFFQYYY). Glutamine 236, tyrosine 239, glutamine 240, and histidine 282 together coordinate CoA. Residues 240–269 (QSGCLYRLRALGERHNMDLTVEGFQSWMWR) are Cytoplasmic-facing. The helical transmembrane segment at 270–293 (GLTFLLPFLFLGHFFQLYNGITLF) threads the bilayer. At 294-303 (QMTQLPEWKE) the chain is on the extracellular side. Residues 304 to 329 (WQVLMCGSTFLVLFMGNFFTTLGVVY) form a helical membrane-spanning segment. At 330–341 (HKYMDQDKAKGL) the chain is on the cytoplasmic side. Lysine 331 is a binding site for CoA.

This sequence belongs to the TMEM120 family. In terms of assembly, homodimer.

The protein localises to the cell membrane. It is found in the nucleus inner membrane. The protein resides in the endoplasmic reticulum. Its function is as follows. Multifunctional protein involved in mechanosensation, and plays an essential role in lipid metabolism. May function as a potential ion channel involved in sensing mechanical stimuli. TMEM120A is structurally similar to a lipid-modifying enzyme, ELOVL7, and contains a bound coenzyme A molecule, which suggests it might function as an enzyme in lipid metabolism. The chain is Transmembrane protein 120A-A (tmem120aa) from Danio rerio (Zebrafish).